A 190-amino-acid polypeptide reads, in one-letter code: MKVGVLSFQGGVIEHLNQIRALGHTGVEVKKEKDLDDIDAIILPGGESTTIGKLLKITGLIKSLKEKIESGLPTWGTCAGMILLANEVEGQEEKYLQLMDIKVKRNAFGTQIDSFKTHKVIEKISKDEMELVFIRAPYITEVKDNVRILCKVDDKIVAARQDNIIVTSFHPELTNDVTFLNYFLKSKWMK.

Residue 46–48 (GES) participates in L-glutamine binding. The active-site Nucleophile is the Cys78. Residues Arg105 and 134-135 (IR) each bind L-glutamine. Catalysis depends on charge relay system residues His170 and Glu172.

This sequence belongs to the glutaminase PdxT/SNO family. As to quaternary structure, in the presence of PdxS, forms a dodecamer of heterodimers. Only shows activity in the heterodimer.

It carries out the reaction aldehydo-D-ribose 5-phosphate + D-glyceraldehyde 3-phosphate + L-glutamine = pyridoxal 5'-phosphate + L-glutamate + phosphate + 3 H2O + H(+). The catalysed reaction is L-glutamine + H2O = L-glutamate + NH4(+). Its pathway is cofactor biosynthesis; pyridoxal 5'-phosphate biosynthesis. In terms of biological role, catalyzes the hydrolysis of glutamine to glutamate and ammonia as part of the biosynthesis of pyridoxal 5'-phosphate. The resulting ammonia molecule is channeled to the active site of PdxS. The chain is Pyridoxal 5'-phosphate synthase subunit PdxT from Clostridium beijerinckii (strain ATCC 51743 / NCIMB 8052) (Clostridium acetobutylicum).